The primary structure comprises 337 residues: Fructose-1,6-bisphosphatase class 1 (337 aa).

Positions 94, 116, 118, and 119 each coordinate Mg(2+). Substrate contacts are provided by residues 119–122 (DGSS), Asn-210, and Lys-276. Residue Glu-282 participates in Mg(2+) binding.

Belongs to the FBPase class 1 family. Homotetramer. The cofactor is Mg(2+).

It localises to the cytoplasm. It carries out the reaction beta-D-fructose 1,6-bisphosphate + H2O = beta-D-fructose 6-phosphate + phosphate. It participates in carbohydrate biosynthesis; gluconeogenesis. In Burkholderia vietnamiensis (strain G4 / LMG 22486) (Burkholderia cepacia (strain R1808)), this protein is Fructose-1,6-bisphosphatase class 1.